Here is a 191-residue protein sequence, read N- to C-terminus: MSEKKNKKERLADEIEQEELNILDETEETVEEEAAADTLTEEQAKILELENKLDEVENRYLRMQADFENVKKRHIADRDASQKYRSQSLAQDLLPALDSFEKALATTSDQEEVKQILKGMEMVYNQILVAFEKEGIEVIPAVGEQFDPNFHQAVMQDSDENAGSNEITAELQKGYKLKDRVIRPSMVKVNQ.

It belongs to the GrpE family. As to quaternary structure, homodimer.

It is found in the cytoplasm. In terms of biological role, participates actively in the response to hyperosmotic and heat shock by preventing the aggregation of stress-denatured proteins, in association with DnaK and GrpE. It is the nucleotide exchange factor for DnaK and may function as a thermosensor. Unfolded proteins bind initially to DnaJ; upon interaction with the DnaJ-bound protein, DnaK hydrolyzes its bound ATP, resulting in the formation of a stable complex. GrpE releases ADP from DnaK; ATP binding to DnaK triggers the release of the substrate protein, thus completing the reaction cycle. Several rounds of ATP-dependent interactions between DnaJ, DnaK and GrpE are required for fully efficient folding. The polypeptide is Protein GrpE (Listeria monocytogenes serotype 4b (strain CLIP80459)).